A 641-amino-acid polypeptide reads, in one-letter code: MTLRGVSMVLTWCLLVSKAWSSGDDSSIDIRGPRLVMPSQARDSCSTQQTTELCVEGNWGRKCPGGCRMLSMLSRTEKDSMRRVDELTKRLARMIQLHTEIHSYYRSVSDVSNQVVTDREDTEARFYALLSDLERKIIYLQRRINGQLTLLSQLRNGIAQQTSTILQLEVDTDVALRTCKGACARQVRYRVDKEMNLQLEKANAYLSGINLALFEEIVHESFSVERDDARSLHPYSGGPASDSEPRDGDGTASQATGFRSDATDPGVSHGNSSKSFGNVDERSKVEKDVNVASTSSVSSSSSSSSSSSSTSSTISSTQKTEELSFKKVSVSTAAVAGKDTDDFQWDSVQTASQTEEGFVRDTGADSTWNQHNVQWNSDFGTASDDEPDFQARSHRTNLSEYIDCLDVLQRRPGGKASGLYEVRPRGAKRALTVHCEQDTDGGGWTLVQQREDGSLNFNRSFSAYREGFGTVDGSGHGELWLGLEAMYLLAHEDSTMRVELQGWDGAGAHAEYTVTLRDDSKGYALQVSDYRGTAGNALVSGVADDPELTSHGGMTFSTYDRDTDKWSDGSCAEWYGGGWWINACQAANLNGVYYQGGPYDPREKPPYEVENGVVWATYRGSDYSLKRTAVRFRRVQIPIVE.

An N-terminal signal peptide occupies residues 1 to 23; sequence MTLRGVSMVLTWCLLVSKAWSSG. The stretch at 107–226 forms a coiled coil; the sequence is SVSDVSNQVV…IVHESFSVER (120 aa). The interval 228-327 is disordered; sequence DARSLHPYSG…QKTEELSFKK (100 aa). Asparagine 271 carries N-linked (GlcNAc...) asparagine glycosylation. Positions 279 to 289 are enriched in basic and acidic residues; sequence VDERSKVEKDV. Residues 293 to 317 are compositionally biased toward low complexity; it reads STSSVSSSSSSSSSSSSTSSTISST. Positions 395–636 constitute a Fibrinogen C-terminal domain; it reads RTNLSEYIDC…RTAVRFRRVQ (242 aa). A glycan (N-linked (GlcNAc...) asparagine) is linked at asparagine 397. Cysteine 404 and cysteine 435 are disulfide-bonded. Asparagine 458 carries an N-linked (GlcNAc...) asparagine glycan. Cysteine 571 and cysteine 584 form a disulfide bridge.

Heterohexamer; disulfide linked. Contains 2 sets of 3 non-identical chains (alpha, beta and gamma). The 2 heterotrimers are in head to head conformation with the N-termini in a small central domain. Post-translationally, conversion of fibrinogen to fibrin is triggered by thrombin, which cleaves fibrinopeptides A and B from alpha and beta chains, and thus exposes the N-terminal polymerization sites responsible for the formation of the soft clot. The soft clot is converted into the hard clot by factor XIIIA which catalyzes the epsilon-(gamma-glutamyl)lysine cross-linking between gamma chains (stronger) and between alpha chains (weaker) of different monomers. In terms of processing, forms F13A-mediated cross-links between a glutamine and the epsilon-amino group of a lysine residue, forming fibronectin-fibrinogen heteropolymers.

Its subcellular location is the secreted. Fibrinogen has a double function: yielding monomers that polymerize into fibrin and acting as a cofactor in platelet aggregation. This chain is Fibrinogen alpha-2 chain, found in Petromyzon marinus (Sea lamprey).